The chain runs to 1151 residues: Ankyrin and IPT/TIG repeat-containing protein C26H5.05 (1151 aa).

3 disordered regions span residues 77-104, 452-511, and 516-535; these read NLPS…AECL, KSRN…ENSR, and QLSA…KSVE. A compositionally biased stretch (polar residues) spans 87–98; it reads SHASSPNLSNSQ. Positions 452–463 are enriched in basic and acidic residues; the sequence is KSRNLTKSEKTG. Polar residues-rich tracts occupy residues 464–496 and 517–532; these read KSNS…SDNP and LSAS…STLK. One can recognise an IPT/TIG domain in the interval 658–739; the sequence is PLISRIIPNK…SSEAPVMFTY (82 aa). ANK repeat units lie at residues 861–890 and 894–923; these read SGRS…DVNK and LGYT…KPDV. The disordered stretch occupies residues 1041-1067; the sequence is PPPYSEFADDTTAQAGSSKRDSAISED. Residues 1058–1067 show a composition bias toward basic and acidic residues; sequence SKRDSAISED. The chain crosses the membrane as a helical span at residues 1113–1133; the sequence is MDFMLFSFWLPALLLLSIFGL.

The protein resides in the vacuole membrane. The sequence is that of Ankyrin and IPT/TIG repeat-containing protein C26H5.05 from Schizosaccharomyces pombe (strain 972 / ATCC 24843) (Fission yeast).